The following is a 266-amino-acid chain: Thymidylate synthase (266 aa).

R24 provides a ligand contact to dUMP. H54 contributes to the (6R)-5,10-methylene-5,6,7,8-tetrahydrofolate binding site. R129–R130 provides a ligand contact to dUMP. C149 functions as the Nucleophile in the catalytic mechanism. Residues R169 to D172, N180, and H210 to Y212 each bind dUMP. D172 provides a ligand contact to (6R)-5,10-methylene-5,6,7,8-tetrahydrofolate. A265 contributes to the (6R)-5,10-methylene-5,6,7,8-tetrahydrofolate binding site.

Belongs to the thymidylate synthase family. Bacterial-type ThyA subfamily. As to quaternary structure, homodimer.

The protein localises to the cytoplasm. The enzyme catalyses dUMP + (6R)-5,10-methylene-5,6,7,8-tetrahydrofolate = 7,8-dihydrofolate + dTMP. It functions in the pathway pyrimidine metabolism; dTTP biosynthesis. Catalyzes the reductive methylation of 2'-deoxyuridine-5'-monophosphate (dUMP) to 2'-deoxythymidine-5'-monophosphate (dTMP) while utilizing 5,10-methylenetetrahydrofolate (mTHF) as the methyl donor and reductant in the reaction, yielding dihydrofolate (DHF) as a by-product. This enzymatic reaction provides an intracellular de novo source of dTMP, an essential precursor for DNA biosynthesis. The chain is Thymidylate synthase from Mycobacterium avium (strain 104).